A 153-amino-acid polypeptide reads, in one-letter code: SKP1-like protein 5 (153 aa).

An interaction with the F-box domain of F-box proteins region spans residues 90 to 153; it reads MMAANYLNIQ…IREENQWAFQ (64 aa).

This sequence belongs to the SKP1 family. In terms of assembly, part of a SCF (SKP1-cullin-F-box) protein ligase complex. Interacts with PP2A13. As to expression, restricted to inflorescences, especially in the inflorescence meristem (IM).

It is found in the nucleus. The protein operates within protein modification; protein ubiquitination. Involved in ubiquitination and subsequent proteasomal degradation of target proteins. Together with CUL1, RBX1 and a F-box protein, it forms a SCF E3 ubiquitin ligase complex. The functional specificity of this complex depends on the type of F-box protein. In the SCF complex, it serves as an adapter that links the F-box protein to CUL1. The protein is SKP1-like protein 5 (ASK5) of Arabidopsis thaliana (Mouse-ear cress).